The following is a 444-amino-acid chain: Ubiquitin carboxyl-terminal hydrolase MINDY-3 (444 aa).

Residue cysteine 51 is the Nucleophile of the active site. A Phosphoserine modification is found at serine 124. The Proton acceptor role is filled by histidine 286.

The protein belongs to the MINDY deubiquitinase family. FAM188 subfamily. As to quaternary structure, interacts with COPS5.

It is found in the nucleus. It catalyses the reaction Thiol-dependent hydrolysis of ester, thioester, amide, peptide and isopeptide bonds formed by the C-terminal Gly of ubiquitin (a 76-residue protein attached to proteins as an intracellular targeting signal).. Hydrolase that can remove 'Lys-48'-linked conjugated ubiquitin from proteins. This Mus musculus (Mouse) protein is Ubiquitin carboxyl-terminal hydrolase MINDY-3.